We begin with the raw amino-acid sequence, 388 residues long: Cell adhesion molecule 4 (388 aa).

The N-terminal stretch at 1–20 (MGRARRFQWPLLLLWAAAAG) is a signal peptide. In terms of domain architecture, Ig-like V-type spans 21 to 119 (PGAGQEVQTE…DTHHQIATLT (99 aa)). Topologically, residues 21–324 (PGAGQEVQTE…VEAQTSVPYA (304 aa)) are extracellular. N31 and N67 each carry an N-linked (GlcNAc...) asparagine glycan. Intrachain disulfides connect C44/C104, C145/C199, and C245/C291. 2 Ig-like C2-type domains span residues 124–219 (PENP…YVLD) and 224–307 (PTAR…YVLV). N286 carries N-linked (GlcNAc...) asparagine glycosylation. A helical membrane pass occupies residues 325 to 345 (IVGGILALLVFLIICVLVGMV). The Cytoplasmic segment spans residues 346–388 (WCSVRQKGSYLTHEASGLDEQGEAREAFLNGSDGHKRKEEFFI). S361 is modified (phosphoserine).

This sequence belongs to the nectin family. In terms of assembly, monomer and homodimer. Post-translationally, N-glycosylated. In terms of tissue distribution, expressed in brain, prostate, brain, kidney and some other organs.

The protein resides in the membrane. Functionally, involved in the cell-cell adhesion. Has calcium- and magnesium-independent cell-cell adhesion activity. May have tumor-suppressor activity. This chain is Cell adhesion molecule 4 (CADM4), found in Homo sapiens (Human).